The primary structure comprises 58 residues: UPF0391 membrane protein Sbal195_1447 (58 aa).

2 consecutive transmembrane segments (helical) span residues 6–26 (LVFLVVAVIAGLLGFTGIAGA) and 28–48 (AGIAKIIFFVFIVLLVISLLV).

This sequence belongs to the UPF0391 family.

The protein localises to the cell membrane. The protein is UPF0391 membrane protein Sbal195_1447 of Shewanella baltica (strain OS195).